Consider the following 471-residue polypeptide: Putative multidrug resistance protein MdtD (471 aa).

The Periplasmic segment spans residues 1–11 (MTDLPDSTRWQ). A helical membrane pass occupies residues 12–32 (LWIVAFGFFMQSLDTTIVNTA). Over 33–48 (LPSMAQSLGESPLHMH) the chain is Cytoplasmic. Residues 49–69 (MVIVSYVLTVAVMLPASGWLA) traverse the membrane as a helical segment. The Periplasmic segment spans residues 70–76 (DKVGVRN). Residues 77–97 (IFFTAIVLFTLGSLFCALSGT) form a helical membrane-spanning segment. Residues 98–101 (LNEL) are Cytoplasmic-facing. Residues 102-124 (LLARALQGVGGAMMVPVGRLTVM) form a helical membrane-spanning segment. At 125-137 (KIVPREQYMAAMT) the chain is on the periplasmic side. The chain crosses the membrane as a helical span at residues 138 to 158 (FVTLPGQVGPLLGPALGGLLV). The Cytoplasmic portion of the chain corresponds to 159 to 164 (EYASWH). Residues 165–185 (WIFLINIPVGIIGAIATLMLM) traverse the membrane as a helical segment. The Periplasmic segment spans residues 186-196 (PNYTMQTRRFD). A helical membrane pass occupies residues 197-217 (LSGFLLLAVGMAVLTLALDGS). Residues 218–224 (KGTGLSP) are Cytoplasmic-facing. A helical membrane pass occupies residues 225–245 (LAIAGLVAVGVVALVLYLLHA). Residues 246–262 (RNNNRALFSLKLFRTRT) lie on the Periplasmic side of the membrane. A helical membrane pass occupies residues 263 to 283 (FSLGLAGSFAGRIGSGMLPFM). Residues 284 to 285 (TP) lie on the Cytoplasmic side of the membrane. A helical membrane pass occupies residues 286–306 (VFLQIGLGFSPFHAGLMMIPM). Topologically, residues 307–341 (VLGSMGMKRIVVQVVNRFGYRRVLVATTLGLSLVT) are periplasmic. Residues 342–362 (LLFMTTALLGWYYVLPFVLFL) form a helical membrane-spanning segment. The Cytoplasmic portion of the chain corresponds to 363-395 (QGMVNSTRFSSMNTLTLKDLPDNLASSGNSLLS). The helical transmembrane segment at 396–416 (MIMQLSMSIGVTIAGLLLGLF) threads the bilayer. At 417–430 (GSQHISVDSGTTQT) the chain is on the periplasmic side. Residues 431 to 451 (VFMYTWLSMAFIIALPAFIFA) traverse the membrane as a helical segment. Residues 452 to 471 (RVPNDTHQNVAISRRKRSAQ) lie on the Cytoplasmic side of the membrane.

The protein belongs to the major facilitator superfamily. TCR/Tet family.

Its subcellular location is the cell inner membrane. The polypeptide is Putative multidrug resistance protein MdtD (Shigella flexneri).